Reading from the N-terminus, the 367-residue chain is Endopolygalacturonase B (367 aa).

A signal peptide spans methionine 1 to alanine 17. The propeptide occupies alanine 18–arginine 30. Cysteine 34 and cysteine 49 are oxidised to a cystine. 5 PbH1 repeats span residues glycine 161–glutamate 191, serine 192–serine 213, glycine 214–serine 234, valine 243–threonine 264, and valine 272–glutamine 294. Residue aspartate 206 is the Proton donor of the active site. Cysteine 208 and cysteine 224 are joined by a disulfide. Residue histidine 228 is part of the active site. Asparagine 279 carries N-linked (GlcNAc...) asparagine glycosylation. 2 cysteine pairs are disulfide-bonded: cysteine 334–cysteine 339 and cysteine 358–cysteine 367.

The protein belongs to the glycosyl hydrolase 28 family.

The protein resides in the secreted. It carries out the reaction (1,4-alpha-D-galacturonosyl)n+m + H2O = (1,4-alpha-D-galacturonosyl)n + (1,4-alpha-D-galacturonosyl)m.. Its function is as follows. Involved in maceration and soft-rotting of plant tissue. Hydrolyzes the 1,4-alpha glycosidic bonds of de-esterified pectate in the smooth region of the plant cell wall. This Aspergillus flavus (strain ATCC MYA-384 / AF70) protein is Endopolygalacturonase B (pgaB).